The following is a 259-amino-acid chain: Protein odd-skipped-related 1 (259 aa).

3 consecutive C2H2-type zinc fingers follow at residues 168-190 (FVCK…ERTH), 196-218 (YTCD…RYIH), and 224-246 (FKCQ…KTLH).

This sequence belongs to the Odd C2H2-type zinc-finger protein family.

It localises to the nucleus. Transcriptional repressor. Required for pronephric kidney development. This chain is Protein odd-skipped-related 1, found in Xenopus tropicalis (Western clawed frog).